The sequence spans 248 residues: Triosephosphate isomerase (248 aa).

9–11 provides a ligand contact to substrate; the sequence is NWK. Catalysis depends on histidine 94, which acts as the Electrophile. Residue glutamate 166 is the Proton acceptor of the active site. Substrate is bound by residues glycine 172, serine 212, and 233-234; that span reads GG.

Belongs to the triosephosphate isomerase family. Homodimer.

It localises to the cytoplasm. It carries out the reaction D-glyceraldehyde 3-phosphate = dihydroxyacetone phosphate. It functions in the pathway carbohydrate biosynthesis; gluconeogenesis. The protein operates within carbohydrate degradation; glycolysis; D-glyceraldehyde 3-phosphate from glycerone phosphate: step 1/1. Functionally, involved in the gluconeogenesis. Catalyzes stereospecifically the conversion of dihydroxyacetone phosphate (DHAP) to D-glyceraldehyde-3-phosphate (G3P). This chain is Triosephosphate isomerase, found in Clostridium botulinum (strain Langeland / NCTC 10281 / Type F).